Consider the following 295-residue polypeptide: Glutamyl-Q tRNA(Asp) synthetase (295 aa).

L-glutamate contacts are provided by residues 5–9 (RFAPS) and E41. The 'HIGH' region signature appears at 8-18 (PSPTGLLHIGS). Zn(2+) is bound by residues C97, C99, Y117, and C121. The L-glutamate site is built by Y178 and R196. A 'KMSKS' region motif is present at residues 234-238 (KWSKQ). K237 lines the ATP pocket.

The protein belongs to the class-I aminoacyl-tRNA synthetase family. GluQ subfamily. The cofactor is Zn(2+).

Its function is as follows. Catalyzes the tRNA-independent activation of glutamate in presence of ATP and the subsequent transfer of glutamate onto a tRNA(Asp). Glutamate is transferred on the 2-amino-5-(4,5-dihydroxy-2-cyclopenten-1-yl) moiety of the queuosine in the wobble position of the QUC anticodon. The protein is Glutamyl-Q tRNA(Asp) synthetase of Neisseria meningitidis serogroup C (strain 053442).